We begin with the raw amino-acid sequence, 187 residues long: Peptide methionine sulfoxide reductase A2-1 (187 aa).

The protein belongs to the MsrA Met sulfoxide reductase family.

Its subcellular location is the cytoplasm. The protein resides in the cytosol. The catalysed reaction is L-methionyl-[protein] + [thioredoxin]-disulfide + H2O = L-methionyl-(S)-S-oxide-[protein] + [thioredoxin]-dithiol. The enzyme catalyses [thioredoxin]-disulfide + L-methionine + H2O = L-methionine (S)-S-oxide + [thioredoxin]-dithiol. Functionally, catalyzes the reduction of methionine sulfoxide (MetSO) to methionine in proteins. Plays a protective role against oxidative stress by restoring activity to proteins that have been inactivated by methionine oxidation. MSRA family specifically reduces the MetSO S-enantiomer. This chain is Peptide methionine sulfoxide reductase A2-1 (MSRA2-1), found in Oryza sativa subsp. japonica (Rice).